The primary structure comprises 197 residues: Caspase recruitment domain-containing protein 16 (197 aa).

Residues 1–91 (MADKVLKEKR…YLAETLGLSA (91 aa)) enclose the CARD domain.

Homooligomer. Interacts with CASP1, CASP4, CARD8 and RIPK2. In terms of tissue distribution, widely expressed. Expressed at higher level in placenta, spleen, lymph node and bone marrow. Weakly or not expressed in thymus.

In terms of biological role, caspase inhibitor. Acts as a regulator of procaspase-1/CASP1 activation implicated in the regulation of the proteolytic maturation of pro-interleukin-1 beta (IL1B) and its release during inflammation. Inhibits the release of IL1B in response to LPS in monocytes. Also induces NF-kappa-B activation during the pro-inflammatory cytokine response. Also able to inhibit CASP1-mediated neuronal cell death, TNF-alpha, hypoxia-, UV-, and staurosporine-mediated cell death but not ER stress-mediated cell death. Acts by preventing activation of caspases CASP1 and CASP4, possibly by preventing the interaction between CASP1 and RIPK2. The sequence is that of Caspase recruitment domain-containing protein 16 (CARD16) from Homo sapiens (Human).